The primary structure comprises 361 residues: Phospho-N-acetylmuramoyl-pentapeptide-transferase (361 aa).

Helical transmembrane passes span 28–48 (LAII…IKFL), 74–94 (TMGG…LADL), 99–119 (IWIT…DDYA), 133–153 (SKLL…EYLD), 168–188 (LSLD…VGSS), 203–223 (VPIA…GNLI), 236–256 (TGEL…FLWF), 263–283 (VFMG…ISVI), 288–308 (IVLA…ILQV), and 338–358 (KVVI…LSSL).

Belongs to the glycosyltransferase 4 family. MraY subfamily. Mg(2+) is required as a cofactor.

It is found in the cell membrane. It carries out the reaction UDP-N-acetyl-alpha-D-muramoyl-L-alanyl-gamma-D-glutamyl-meso-2,6-diaminopimeloyl-D-alanyl-D-alanine + di-trans,octa-cis-undecaprenyl phosphate = di-trans,octa-cis-undecaprenyl diphospho-N-acetyl-alpha-D-muramoyl-L-alanyl-D-glutamyl-meso-2,6-diaminopimeloyl-D-alanyl-D-alanine + UMP. It functions in the pathway cell wall biogenesis; peptidoglycan biosynthesis. Functionally, catalyzes the initial step of the lipid cycle reactions in the biosynthesis of the cell wall peptidoglycan: transfers peptidoglycan precursor phospho-MurNAc-pentapeptide from UDP-MurNAc-pentapeptide onto the lipid carrier undecaprenyl phosphate, yielding undecaprenyl-pyrophosphoryl-MurNAc-pentapeptide, known as lipid I. The protein is Phospho-N-acetylmuramoyl-pentapeptide-transferase of Rickettsia montanensis.